Here is a 606-residue protein sequence, read N- to C-terminus: Maternal effect protein oskar (606 aa).

One can recognise an HTH OST-type domain in the interval 152–221 (EYPDIDSEVR…SGKRIFNLKA (70 aa)). Phosphoserine occurs at positions 270 and 275. The interval 425-439 (LMGDDFMLYLARMEL) is leucine-zipper.

As to quaternary structure, interacts with smaug (smg). In terms of assembly, interacts with yl/yolkless. As to expression, begins to accumulate at the posterior pole of the oocyte from stage 8 onwards.

It localises to the endosome. Its function is as follows. Organizes the germ plasm and directs localization of the posterior determinant nanos. Oskar protein is required to keep nanos (nos) RNA and staufen protein at the posterior pole. This Drosophila melanogaster (Fruit fly) protein is Maternal effect protein oskar (osk).